Reading from the N-terminus, the 459-residue chain is Cysteine--tRNA ligase (459 aa).

A Zn(2+)-binding site is contributed by Cys-29. The 'HIGH' region signature appears at 31-41 (PTVYNLVHIGN). Zn(2+) contacts are provided by Cys-209, His-234, and Glu-238. A 'KMSKS' region motif is present at residues 267 to 271 (KMSKS). Lys-270 contributes to the ATP binding site.

It belongs to the class-I aminoacyl-tRNA synthetase family. Monomer. Zn(2+) is required as a cofactor.

Its subcellular location is the cytoplasm. The enzyme catalyses tRNA(Cys) + L-cysteine + ATP = L-cysteinyl-tRNA(Cys) + AMP + diphosphate. This Saccharophagus degradans (strain 2-40 / ATCC 43961 / DSM 17024) protein is Cysteine--tRNA ligase.